The primary structure comprises 250 residues: Small ribosomal subunit protein uS3z (250 aa).

The 72-residue stretch at 21–92 folds into the KH type-2 domain; sequence LNEVLTRELA…SVELYAEKVN (72 aa).

Belongs to the universal ribosomal protein uS3 family. As to quaternary structure, interacts with SNRNP35.

This chain is Small ribosomal subunit protein uS3z (RPS3A), found in Arabidopsis thaliana (Mouse-ear cress).